A 176-amino-acid chain; its full sequence is 2-oxo-4-hydroxy-4-carboxy-5-ureidoimidazoline decarboxylase (176 aa).

His-70 serves as the catalytic Proton donor; for OHCU decarboxylase activity. Substrate is bound by residues Pro-71, 83–87 (SQEEQ), and 118–122 (FIMAV). The interval 72–96 (DLGERTEMTDESQEEQASAGLDRLP) is disordered.

The protein belongs to the OHCU decarboxylase family.

It catalyses the reaction 5-hydroxy-2-oxo-4-ureido-2,5-dihydro-1H-imidazole-5-carboxylate + H(+) = (S)-allantoin + CO2. The protein operates within purine metabolism; urate degradation; (S)-allantoin from urate: step 3/3. Catalyzes the stereoselective decarboxylation of 2-oxo-4-hydroxy-4-carboxy-5-ureidoimidazoline (OHCU) to (S)-allantoin. The protein is 2-oxo-4-hydroxy-4-carboxy-5-ureidoimidazoline decarboxylase of Halalkalicoccus jeotgali (strain DSM 18796 / CECT 7217 / JCM 14584 / KCTC 4019 / B3).